A 393-amino-acid chain; its full sequence is Arginine--pyruvate transaminase AruH (393 aa).

Residue K237 is modified to N6-(pyridoxal phosphate)lysine.

Belongs to the class-I pyridoxal-phosphate-dependent aminotransferase family. Homodimer. The cofactor is pyridoxal 5'-phosphate.

The catalysed reaction is L-arginine + pyruvate = 5-guanidino-2-oxopentanoate + L-alanine. Its pathway is amino-acid degradation; L-arginine degradation. In terms of biological role, catalyzes the conversion of L-arginine into 2-ketoarginine via transamination. L-arginine is the best substrate, but it can also use L-lysine, L-methionine, L-leucine, ornithine and L-glutamine, which indicates that it may have a broader physiological function in amino acid catabolism. The polypeptide is Arginine--pyruvate transaminase AruH (aruH) (Pseudomonas aeruginosa (strain ATCC 15692 / DSM 22644 / CIP 104116 / JCM 14847 / LMG 12228 / 1C / PRS 101 / PAO1)).